Reading from the N-terminus, the 2718-residue chain is E3 SUMO-protein ligase RanBP2 (2718 aa).

Residues 1 to 100 form a sufficient for interaction with Hsp83 region; it reads MFTTRKEVDA…DPRQSEVVID (100 aa). The interval 1–200 is sufficient for interaction with piwi; sequence MFTTRKEVDA…EKMKIDQAFN (200 aa). 2 TPR repeats span residues 26-58 and 59-94; these read DIKGLAVARLYMKVQEYPKAIEYLNGYLRVRDD and AVGHNMIATCYSRLNPPDVTEALQHYQRSIQIDPRQ. 2 disordered regions span residues 796-816 and 937-959; these read QQDRNSRGIDNSFGSPDVHNN and EHQQQQQHQQQQSHNQGAIHPVV. Over residues 803-816 the composition is skewed to polar residues; that stretch reads GIDNSFGSPDVHNN. Repeat 1 spans residues 808–809; it reads FG. Residues 808–2581 are 27 X 2 AA repeats of F-G; the sequence is FGSPDVHNNS…GEENETKLFG (1774 aa). Low complexity predominate over residues 938 to 948; that stretch reads HQQQQQHQQQQ. Tandem repeats lie at residues 1028–1029, 1035–1036, and 1104–1105. The tract at residues 1181–1208 is disordered; the sequence is QPVEKEPPANVVITSSDPLPKPTTASVQ. The segment covering 1192–1208 has biased composition (polar residues); it reads VITSSDPLPKPTTASVQ. Repeat unit 5 spans residues 1252 to 1253; sequence FG. 2 disordered regions span residues 1263–1314 and 1483–1502; these read FKTQ…KPII and NKPQEQTKTQPNPDPPATAA. Polar residues predominate over residues 1284 to 1299; it reads NQSGATDPNKTLPQDT. The RanBD1 1 domain maps to 1309–1445; it reads DFKPIIPLPD…FTKASEAAKS (137 aa). Residues 1483-1493 show a composition bias toward polar residues; sequence NKPQEQTKTQP. 4 repeat units span residues 1506 to 1507, 1539 to 1540, 1547 to 1548, and 1552 to 1553. The region spanning 1605 to 1742 is the RanBD1 2 domain; it reads QFVPVIALPD…VQKAQQSIGN (138 aa). The segment at 1738–1761 is disordered; that stretch reads QSIGNEPKKEEVPSAAGEKEKPIK. A compositionally biased stretch (basic and acidic residues) spans 1743–1760; it reads EPKKEEVPSAAGEKEKPI. The stretch at 1763–1764 is repeat 10; that stretch reads FG. A RanBP2-type 1 zinc finger spans residues 1770 to 1799; that stretch reads KAGSWNCQACYTNNGQDQLYCLACQEPKDA. Repeat copies occupy residues 1826–1827, 1842–1843, 1874–1875, and 1883–1884. The RanBP2-type 2 zinc finger occupies 1890-1919; that stretch reads AVGSWSCSACYVNNPGESLYCSACDAPKND. Tandem repeats lie at residues 1942–1943 and 1944–1945. 3 disordered regions span residues 1981-2021, 2154-2204, and 2239-2273; these read FTFS…TYFS, EDSP…THEV, and SLSRNNSSASEASKTPSSAFIFGSTDKSEPGKDAG. Positions 2002-2016 are enriched in acidic residues; the sequence is EDEDNDSQEVEEEEN. Positions 2019-2151 constitute a RanBD1 3 domain; the sequence is YFSPVIPLPD…IKNALNETAK (133 aa). Residues 2161-2175 are compositionally biased toward polar residues; sequence SVSQSTEANKPSQKN. The segment covering 2239 to 2257 has biased composition (low complexity); the sequence is SLSRNNSSASEASKTPSSA. 11 tandem repeats follow at residues 2260 to 2261, 2313 to 2314, 2332 to 2333, 2352 to 2353, 2360 to 2361, 2366 to 2367, 2393 to 2394, 2399 to 2400, 2415 to 2416, 2421 to 2422, and 2580 to 2581. The tract at residues 2320–2346 is disordered; the sequence is AEQQKKDSSESVFGGNKADSQSPATQE. The RanBD1 4 domain occupies 2556-2699; the sequence is HYDAIVELPD…VNSCIKRAKA (144 aa).

This sequence belongs to the RanBP2 E3 ligase family. In terms of assembly, part of the nuclear pore complex. Forms a complex with Nxt1, sbr/Nxf1 and RanGAP. Interacts (via TPR repeats) with Hsp83; the interaction is required for the nuclear import of the sesquiterpenoid juvenile hormone receptor Met. Interacts (via N-terminus) with piwi. Expressed in both oocytes and nurse cells (at protein level).

It is found in the nucleus. The protein localises to the nuclear pore complex. In terms of biological role, E3 SUMO-protein ligase. Component of the nuclear pore complex (NPC), a complex required for trafficking across the nuclear envelope. Required for nuclear import of nuclear localization signal (NLS)-containing proteins in an importin alpha/importin beta-dependent manner, but also for the nuclear import of specific proteins such as phosphorylated Mad or the sesquiterpenoid juvenile hormone receptor Met as part of the juvenile hormone signal transduction pathway. Plays a role in nuclear mRNA export by recruiting the mRNA transport complex composed of Nxt1 and sbr/Nxf1 to the NPC. Essential during germline development for transposon silencing and piRNA biogenesis probably by regulating piwi localization to the nucleus. During oogenesis, required to form granules that modulate the biogenesis of annulate lamellae containing nuclear pore complex components. The sequence is that of E3 SUMO-protein ligase RanBP2 from Drosophila melanogaster (Fruit fly).